A 216-amino-acid chain; its full sequence is MNLILMGLPGAGKGTQAEKIIDTYGIPHISTGDMFRAAMKNETALGLEAKSYIDKGELVPDEVTNGIVKERLAEPDTDKGFLLDGFPRTLDQAKALDTMLKELNKKIDAVIDIHVEEDVLIERLAGRFICRTCGATYHKLFNPPKVEGTCDRCGGHEFYQREDDKPETVKNRLAVNIESSAPILAFYKEQGLMHTIDGNREIDTVFSDVKKIIDEN.

ATP is bound at residue 10-15; that stretch reads GAGKGT. The NMP stretch occupies residues 30 to 59; the sequence is STGDMFRAAMKNETALGLEAKSYIDKGELV. AMP is bound by residues Thr-31, Arg-36, 57–59, 85–88, and Gln-92; these read ELV and GFPR. The LID stretch occupies residues 126–164; it reads GRFICRTCGATYHKLFNPPKVEGTCDRCGGHEFYQREDD. Residue Arg-127 participates in ATP binding. Cys-130 and Cys-133 together coordinate Zn(2+). Residue 136 to 137 coordinates ATP; it reads TY. Cys-150 and Cys-153 together coordinate Zn(2+). Positions 161 and 172 each coordinate AMP. An ATP-binding site is contributed by Arg-200.

The protein belongs to the adenylate kinase family. In terms of assembly, monomer.

It localises to the cytoplasm. The enzyme catalyses AMP + ATP = 2 ADP. Its pathway is purine metabolism; AMP biosynthesis via salvage pathway; AMP from ADP: step 1/1. Functionally, catalyzes the reversible transfer of the terminal phosphate group between ATP and AMP. Plays an important role in cellular energy homeostasis and in adenine nucleotide metabolism. This Enterococcus faecalis (strain ATCC 700802 / V583) protein is Adenylate kinase.